We begin with the raw amino-acid sequence, 75 residues long: UPF0154 protein MMOB4450 (75 aa).

The helical transmembrane segment at 7 to 27 threads the bilayer; the sequence is IGLIVGLSILFTIVGLVVGFF.

It belongs to the UPF0154 family.

It is found in the cell membrane. This chain is UPF0154 protein MMOB4450, found in Mycoplasma mobile (strain ATCC 43663 / 163K / NCTC 11711) (Mesomycoplasma mobile).